A 167-amino-acid chain; its full sequence is Putative C-type lectin-like domain family 1 (167 aa).

At 1 to 67 (MVSNFFHVIQ…KYDCPFSGTS (67 aa)) the chain is on the cytoplasmic side. The helical; Signal-anchor for type II membrane protein transmembrane segment at 68–88 (FVVFSLFLICAMAGDVVYADI) threads the bilayer. Topologically, residues 89 to 167 (KTVRTSPLEL…DITAMVRFNI (79 aa)) are extracellular. N109, N140, and N149 each carry an N-linked (GlcNAc...) asparagine glycan. The C-type lectin; atypical domain maps to 116–167 (SCPAKDWKVHKGKCYWIAETKKSWNKSQNDCAINNSYLMVIQDITAMVRFNI).

As to expression, expressed in spleen, lymph node, and tonsil. Lower expression in peripheral blood, bone marrow, and colon. No expression detected in thymus. Highly expressed in dendritic and B-cells.

It localises to the cell membrane. Functionally, may function in mediating immune cell-cell interactions. May act as a T-cell costimulatory molecule, enhancing anti-CD3-induced proliferation. May play a role in the interaction of dendritic cells with T-cells and the cells of the adaptive immune response. The sequence is that of Putative C-type lectin-like domain family 1 from Homo sapiens (Human).